The primary structure comprises 115 residues: Double-headed protease inhibitor, submandibular gland (115 aa).

Kazal-like domains are found at residues 6–66 (IGRE…ACDI) and 67–115 (ECTE…HGEC). 6 disulfide bridges follow: C12-C46, C24-C43, C32-C64, C68-C97, C75-C94, and C83-C115.

It is found in the secreted. Its function is as follows. This inhibitor is composed of two homologous actively inhibiting halves: one which inhibits trypsin, the other which inhibits elastase. The polypeptide is Double-headed protease inhibitor, submandibular gland (Vulpes vulpes (Red fox)).